We begin with the raw amino-acid sequence, 366 residues long: Histone-lysine N-methyltransferase SETD7 (366 aa).

3 MORN repeats span residues phenylalanine 36–threonine 58, leucine 59–serine 81, and phenylalanine 106–serine 128. Residues glutamate 214–glycine 336 enclose the SET domain. S-adenosyl-L-methionine-binding positions include alanine 226–glutamate 228, asparagine 296, and histidine 297.

Belongs to the class V-like SAM-binding methyltransferase superfamily. Histone-lysine methyltransferase family. SET7 subfamily.

It is found in the nucleus. The protein resides in the chromosome. It carries out the reaction L-lysyl(4)-[histone H3] + S-adenosyl-L-methionine = N(6)-methyl-L-lysyl(4)-[histone H3] + S-adenosyl-L-homocysteine + H(+). It catalyses the reaction L-lysyl-[protein] + S-adenosyl-L-methionine = N(6)-methyl-L-lysyl-[protein] + S-adenosyl-L-homocysteine + H(+). Its function is as follows. Histone methyltransferase that specifically monomethylates 'Lys-4' of histone H3. H3 'Lys-4' methylation represents a specific tag for epigenetic transcriptional activation. Plays a central role in the transcriptional activation of genes. Also has methyltransferase activity toward non-histone proteins. This Xenopus tropicalis (Western clawed frog) protein is Histone-lysine N-methyltransferase SETD7 (setd7).